Here is a 109-residue protein sequence, read N- to C-terminus: Protein AC78 (109 aa).

Residues G61–I81 traverse the membrane as a helical segment.

The protein localises to the host membrane. Its subcellular location is the virion. In terms of biological role, plays an essential role in budded virus production and occlusion body formation. This Autographa californica nuclear polyhedrosis virus (AcMNPV) protein is Protein AC78 (AC78).